The following is a 657-amino-acid chain: MTDRIVPATLVFREDGTVVSPLYGDIYHSAAGALAQADHVFIRGNGLPERWRHERAFTIIETGFGTGCNFLATWAAWRADPSHCERLHFVSVEKHPFAREDLRRAAAHIVAYTTITPIAPLVDELANAWPALTPGVHRLEFDDGRVTLTLVFGDALDVLPNLALRAHAFYLDGFAPSKNADLWSPAIFKSLAKLADERATFATYTSSGAVKRALDEAGFAYRKVDGFAGKRAMLVGEFAPRWRVRRHEPPRAFSTDIRDAIVIGAGLAGCAVVERLAARGWHVTLIERRERIASEASGNPAGVFHPMIARDDNLAARLSRAGFLHALNRWRALERAGHAFSRSTHGLVQLATSDNEFERMRESIDALGVPAELASALSRDDARALLRTDVAHGGWLFAQGGSISPAALAAAQCAAAGDRLSRIVGVEIARLERGGDGRWRALDASGATIAQASVVVVANAADAARIAGLRHAPTQRVRGQLTLLPPGSAPAVPLPVIGDGYVVPLANGVTLTGATYEPDDTDATPREAGHRENLERLERLLPAFSANALDAGALAGRVGFRCVASDRLPLVGELGDEAAAAREAAALTGARLRDVPRATGLYGAFGYGSRGLVWAALGAELIAAQIDGEPWPLERELAEAIDPARFLVRALRHGRVA.

Residues 1–239 (MTDRIVPATL…KRAMLVGEFA (239 aa)) form a tRNA (mnm(5)s(2)U34)-methyltransferase region. The interval 263 to 657 (IGAGLAGCAV…VRALRHGRVA (395 aa)) is FAD-dependent cmnm(5)s(2)U34 oxidoreductase.

In the N-terminal section; belongs to the methyltransferase superfamily. tRNA (mnm(5)s(2)U34)-methyltransferase family. The protein in the C-terminal section; belongs to the DAO family. The cofactor is FAD.

The protein localises to the cytoplasm. It catalyses the reaction 5-aminomethyl-2-thiouridine(34) in tRNA + S-adenosyl-L-methionine = 5-methylaminomethyl-2-thiouridine(34) in tRNA + S-adenosyl-L-homocysteine + H(+). Functionally, catalyzes the last two steps in the biosynthesis of 5-methylaminomethyl-2-thiouridine (mnm(5)s(2)U) at the wobble position (U34) in tRNA. Catalyzes the FAD-dependent demodification of cmnm(5)s(2)U34 to nm(5)s(2)U34, followed by the transfer of a methyl group from S-adenosyl-L-methionine to nm(5)s(2)U34, to form mnm(5)s(2)U34. This is tRNA 5-methylaminomethyl-2-thiouridine biosynthesis bifunctional protein MnmC from Burkholderia pseudomallei (strain 668).